We begin with the raw amino-acid sequence, 598 residues long: Nicotinamide riboside transporter 1 (598 aa).

Transmembrane regions (helical) follow at residues 48–68, 71–91, 112–132, 174–194, 197–217, 241–261, 273–293, 372–392, 395–415, 447–467, and 484–504; these read LAYWGAVSFTAGTWMSGSAAL, GLSYPETIVSFLLGNVLTIIF, FVFGIYGSAFGIIIRILMSIV, LVGFIIFHVLTALCYFMKPYH, YLLIWSCVATCFAMLGIVIYL, AWAWVYMISYWFGSISPGSTN, LAIWTGSVCALLIPATLVPIF, GALFCACISWACLPWNFYNSS, FLTVMSSFGVVMTPIIAVMIC, AIVAWVCGMAPGLPGIAWEVN, and SFFSFLISFFVYWGLCVFFPF. 2 positions are modified to phosphoserine: serine 560 and serine 572.

This sequence belongs to the purine-cytosine permease (2.A.39) family.

It localises to the cell membrane. High-affinity pH-dependent nicotinamide riboside transporter which also transports thiamine with low affinity. Involved in 5-fluorocytosine sensitivity. This chain is Nicotinamide riboside transporter 1 (NRT1), found in Saccharomyces cerevisiae (strain ATCC 204508 / S288c) (Baker's yeast).